The sequence spans 665 residues: Protein-arginine deiminase type-2 (665 aa).

Positions 123, 125, 127, 131, 154, 156, 158, 166, 169, 171, 177, 180, 354, 389, 408, 411, and 412 each coordinate Ca(2+). Cys647 serves as the catalytic Nucleophile.

The protein belongs to the protein arginine deiminase family. As to quaternary structure, homodimer. Ca(2+) serves as cofactor. Spinal cord, submaxillary gland, cerebrum, cerebellum, and skeletal muscle.

The protein localises to the cytoplasm. The enzyme catalyses L-arginyl-[protein] + H2O = L-citrullyl-[protein] + NH4(+). Functionally, catalyzes the deimination of arginine residues of proteins. The polypeptide is Protein-arginine deiminase type-2 (Padi2) (Rattus norvegicus (Rat)).